We begin with the raw amino-acid sequence, 121 residues long: Cytochrome c2 iso-2 (121 aa).

Heme c is bound by residues Cys15, Cys18, His19, and Met98.

This sequence belongs to the cytochrome c family. Post-translationally, binds 1 heme c group covalently per subunit.

Its function is as follows. Cytochrome c2 is found mainly in purple, non-sulfur, photosynthetic bacteria where it functions as the electron donor to the oxidized bacteriochlorophyll in the photophosphorylation pathway. However, it may also have a role in the respiratory chain and is found in some non-photosynthetic bacteria. The sequence is that of Cytochrome c2 iso-2 from Rhodospirillum centenum (Rhodocista centenaria).